The sequence spans 559 residues: Protein pp71 (559 aa).

At Cys-218 the chain carries S-nitrosocysteine; by host. Thr-223 is subject to Phosphothreonine. Disordered regions lie at residues 404-440 and 530-559; these read EFLP…TPLS and SSTL…RPRI. Residues 415–430 are compositionally biased toward acidic residues; it reads TEEEEEEEEEDDEDDL. Low complexity-rich tracts occupy residues 431 to 440 and 543 to 559; these read SSTPTPTPLS and PIST…RPRI.

The protein belongs to the herpesviridae pp71 family. As to quaternary structure, interacts with the host protein DAXX; this interaction takes place at ND10 and induces the reversal of DAXX-mediated repression of viral transcription. Interacts with UL35. Interacts with host TMEM173/STING1; this interaction inhibits the cGAS/STING pathway. Interacts with host RB1; this interaction mediates RB1 proteasomal degradation. S-nitrosylation limits ability to undermine the cGAS/STING antiviral pathway.

Its subcellular location is the virion tegument. It localises to the host nucleus. It is found in the host endoplasmic reticulum. Stimulates viral immediate-early (IE) transcription. Plays a role in the inhibition of the host innate repsonse by targeting STING1 and thus the cGAS-STING pathway. Also counteracts host DAXX-mediated repression of viral transcription. Displaces a DAXX-binding protein, ATRX, from nuclear domain 10 sites (ND10) shortly after infection. Increases the basal level of SUMOylated DAXX in infected cells. Stimulates quiescent cells to re-enter the cell cycle, proceed through G1 and enter the S phase. Interacts with hypophosphorylated forms of RB1 and induces their degradation by the proteasome without involving ubiquitin conjugation. The sequence is that of Protein pp71 (UL82) from Human cytomegalovirus (strain AD169) (HHV-5).